The following is a 339-amino-acid chain: Tetraacyldisaccharide 4'-kinase (339 aa).

53–60 lines the ATP pocket; that stretch reads TCGGAGKT.

It belongs to the LpxK family.

It carries out the reaction a lipid A disaccharide + ATP = a lipid IVA + ADP + H(+). Its pathway is glycolipid biosynthesis; lipid IV(A) biosynthesis; lipid IV(A) from (3R)-3-hydroxytetradecanoyl-[acyl-carrier-protein] and UDP-N-acetyl-alpha-D-glucosamine: step 6/6. In terms of biological role, transfers the gamma-phosphate of ATP to the 4'-position of a tetraacyldisaccharide 1-phosphate intermediate (termed DS-1-P) to form tetraacyldisaccharide 1,4'-bis-phosphate (lipid IVA). This Bartonella henselae (strain ATCC 49882 / DSM 28221 / CCUG 30454 / Houston 1) (Rochalimaea henselae) protein is Tetraacyldisaccharide 4'-kinase.